A 253-amino-acid chain; its full sequence is tRNA pseudouridine synthase A (253 aa).

D53 functions as the Nucleophile in the catalytic mechanism. Y112 is a substrate binding site.

This sequence belongs to the tRNA pseudouridine synthase TruA family. As to quaternary structure, homodimer.

It carries out the reaction uridine(38/39/40) in tRNA = pseudouridine(38/39/40) in tRNA. Functionally, formation of pseudouridine at positions 38, 39 and 40 in the anticodon stem and loop of transfer RNAs. This Lactococcus lactis subsp. cremoris (strain MG1363) protein is tRNA pseudouridine synthase A.